We begin with the raw amino-acid sequence, 255 residues long: MGAMAENLLVLCTILAARMALAAADDWIPATATFYGGNDGSGTMGGACGYGNLYDQGYGLENAALSTALFNDGAACGQCYLIVCDTDKAGRWCKPRGAVTVTATNLCPPNWALPSDGGGWCNPPRRHFDMSQPAWERIGVYRAGIVPVLYRRVRCWRRGGVRFTVGGFDHFELVLVANVAGSGSVAAVSVRGAGTGWLQMSRNWGANWQSLAGLAGQPLSFGVTTTGGQYILFQDVAPAGWKFGQTFSTSKQFDY.

Positions 1-24 (MGAMAENLLVLCTILAARMALAAA) are cleaved as a signal peptide. An Expansin-like EG45 domain is found at 45 to 160 (GGACGYGNLY…RRVRCWRRGG (116 aa)). Positions 170–249 (HFELVLVANV…GWKFGQTFST (80 aa)) constitute an Expansin-like CBD domain.

Belongs to the expansin family. Expansin A subfamily.

Its subcellular location is the secreted. It is found in the cell wall. The protein resides in the membrane. May cause loosening and extension of plant cell walls by disrupting non-covalent bonding between cellulose microfibrils and matrix glucans. No enzymatic activity has been found. May be required for rapid internodal elongation in deepwater rice during submergence. This Oryza sativa subsp. japonica (Rice) protein is Putative expansin-A27 (EXPA27).